Reading from the N-terminus, the 450-residue chain is MQSSEGSPDMMDQKYNSVRLSPAASSRILYHVPCKVCRDHSSGKHYGIYACDGCAGFFKRSIRRSRQYVCKSQKQGLCVVDKTHRNQCRACRLRKCFEVGMNKDAVQHERGPRNSTLRRHMAMYKDAMMGAAEMPQIPPEILMNTAALTGFPGLPMPMPGVQRSHHHAALSAAFQPPPSAAVLDLSVPRVPHHPVHQGHHGFFSPTAAYMNALATRALPPTPPLMAAEHIKETAAEHLFKNVNWIKSVRAFTELPMPDQLLLLEESWKEFFILAMAQYLMPMNFAQLLFVYESENANREIVTIVAREVHAFQDVLNQLCHLNIDSTEYECLRAISLFRKSPPAASSTEDLANSSILTGSGSPNSSASAESRGLLESSKVAAMHNDARNALHNYISRTHPNQPLRFQTLLGVVTLMHKVSSFTIEELFFRKTIGDITIVRLISDMYSQRKI.

Positions 31–108 (HVPCKVCRDH…VGMNKDAVQH (78 aa)) form a DNA-binding region, nuclear receptor. 2 NR C4-type zinc fingers span residues 34 to 54 (CKVCRDHSSGKHYGIYACDGC) and 70 to 96 (CKSQKQGLCVVDKTHRNQCRACRLRKC). An NR LBD domain is found at 187–448 (VPRVPHHPVH…RLISDMYSQR (262 aa)).

The protein belongs to the nuclear hormone receptor family. NR2 subfamily. Monomer.

The protein localises to the nucleus. In terms of biological role, orphan receptor that binds DNA as a monomer to hormone response elements (HRE) containing an extended core motif half-site sequence 5'-AAGTCA-3' in which the 5' flanking nucleotides participate in determining receptor specificity. This receptor binds to the consensus sequence [AG][AG]AAGTCAA. Plays a key role in the establishment of non-metameric domains at the anterior and posterior poles of the embryo. It may also play a role in the nervous system. The maternal terminal pathway activates the tll gene in the termini; TLL activity then represses segmentation and activates terminal-specific genes in these domains. Involved in the regulation of early eye development. In the embryonic visual system anlage drives cells to optic lobe as opposed to Bolwig's organ fate. The chain is Protein tailless (tll) from Drosophila virilis (Fruit fly).